Reading from the N-terminus, the 216-residue chain is ATP-dependent Clp protease proteolytic subunit 1 (216 aa).

Catalysis depends on S119, which acts as the Nucleophile. H144 is an active-site residue.

Belongs to the peptidase S14 family. In terms of assembly, fourteen ClpP subunits assemble into 2 heptameric rings which stack back to back to give a disk-like structure with a central cavity, resembling the structure of eukaryotic proteasomes.

The protein localises to the cytoplasm. The catalysed reaction is Hydrolysis of proteins to small peptides in the presence of ATP and magnesium. alpha-casein is the usual test substrate. In the absence of ATP, only oligopeptides shorter than five residues are hydrolyzed (such as succinyl-Leu-Tyr-|-NHMec, and Leu-Tyr-Leu-|-Tyr-Trp, in which cleavage of the -Tyr-|-Leu- and -Tyr-|-Trp bonds also occurs).. Its function is as follows. Cleaves peptides in various proteins in a process that requires ATP hydrolysis. Has a chymotrypsin-like activity. Plays a major role in the degradation of misfolded proteins. The chain is ATP-dependent Clp protease proteolytic subunit 1 from Cutibacterium acnes (strain DSM 16379 / KPA171202) (Propionibacterium acnes).